Consider the following 905-residue polypeptide: V-type proton ATPase 116 kDa subunit a 1 (905 aa).

Residues 1–424 lie on the Cytoplasmic side of the membrane; it reads MGDYVTPGEE…DAYGIATYRE (424 aa). A helical transmembrane segment spans residues 425 to 443; sequence INPAPYTMISFPFLFAVMF. The Lumenal portion of the chain corresponds to 444–445; sequence GD. The helical transmembrane segment at 446-462 threads the bilayer; sequence MGHGAIMLLAALFFILK. The Cytoplasmic segment spans residues 463 to 477; that stretch reads EKQLEAARIKDEIFQ. Residues 478-507 traverse the membrane as a helical segment; the sequence is TFFGGRYVIFLMGAFSIYTGFMYNDVFSKS. The Lumenal portion of the chain corresponds to 508-572; the sequence is INTFGSSWQN…EGNKLSFLNS (65 aa). Residues 573–592 form a helical membrane-spanning segment; that stretch reads MKMKMSVLFGIAQMTFGVLL. The Cytoplasmic portion of the chain corresponds to 593-610; sequence SYQNFIYFKSDLDIKYMF. Residues 611-631 traverse the membrane as a helical segment; sequence IPQMIFLSSIFIYLCIQILSK. At 632–699 the chain is on the lumenal side; that stretch reads WLFFGAVGGT…YPGQATIEII (68 aa). The chain crosses the membrane as a helical span at residues 700–719; sequence LVVLALVQVPIMLFAKPYFL. Residues 720 to 788 lie on the Cytoplasmic side of the membrane; the sequence is YRRDKQQSRY…DVMVYQAIHT (69 aa). The helical transmembrane segment at 789-813 threads the bilayer; that stretch reads IEFVLGCVSHTASYLRLWALSLAHA. Topologically, residues 814–834 are lumenal; the sequence is QLSDVLWTMVFRNAFVLDGYT. A helical transmembrane segment spans residues 835–873; it reads GAIATYILFFIFGSLSVFILVLMEGLSAFLHALRLHWVE. Over 874-905 the chain is Cytoplasmic; sequence FQSKFYGGLGYEFAPFSFEKILAEEREAEENL.

The protein belongs to the V-ATPase 116 kDa subunit family. As to quaternary structure, V-ATPase is a heteromultimeric enzyme made up of two complexes: the ATP-hydrolytic V1 complex and the proton translocation V0 complex. The V1 complex consists of three catalytic AB heterodimers that form a heterohexamer, three peripheral stalks each consisting of EG heterodimers, one central rotor including subunits D and F, and the regulatory subunits C and H. The proton translocation complex V0 consists of the proton transport subunit a, a ring of proteolipid subunits c9c'', rotary subunit d, subunits e and f, and the accessory subunits vah-19/Ac45 and vah-20/PRR. Interacts with V-type proton ATPase subunit C vha-11. As to expression, ubiquitous expression in embryos. Expressed in gonads, intestine, neurons in the head and motoneurons in the ventral cord of larvae and adults. Expressed in the vulvae and spermathecal uterine valves. Weakly expressed in the pharynx. In terms of tissue distribution, specifically expressed in the nervous system.

The protein localises to the membrane. Subunit of the V0 complex of vacuolar(H+)-ATPase (V-ATPase), a multisubunit enzyme composed of a peripheral complex (V1) that hydrolyzes ATP and a membrane integral complex (V0) that translocates protons. V-ATPase is responsible for acidifying and maintaining the pH of intracellular compartments and in some cell types, is targeted to the plasma membrane, where it is responsible for acidifying the extracellular environment. Required for assembly and activity of the vacuolar ATPase. Regulates the size of gut granules during embryonic development. In neurons, required for necrotic cell death by promoting intracellular acidification. Required for cell death induced by hypoxia. Required for acidification of synaptic vesicles and the release of neurotransmitters from adult neurons. This is V-type proton ATPase 116 kDa subunit a 1 from Caenorhabditis elegans.